Here is a 304-residue protein sequence, read N- to C-terminus: Acetylglutamate kinase (304 aa).

Residues 77–78, Arg99, and Asn193 contribute to the substrate site; that span reads GG.

The protein belongs to the acetylglutamate kinase family. ArgB subfamily.

It is found in the cytoplasm. It catalyses the reaction N-acetyl-L-glutamate + ATP = N-acetyl-L-glutamyl 5-phosphate + ADP. It functions in the pathway amino-acid biosynthesis; L-arginine biosynthesis; N(2)-acetyl-L-ornithine from L-glutamate: step 2/4. Catalyzes the ATP-dependent phosphorylation of N-acetyl-L-glutamate. This chain is Acetylglutamate kinase, found in Pelodictyon phaeoclathratiforme (strain DSM 5477 / BU-1).